We begin with the raw amino-acid sequence, 616 residues long: MKKQFDTEVNDLLYLIIHSLYSHKEIFLRELISNASDAIDKLKFLSLTNEKFKNIALEPKIEITFDDKSILIKDNGIGMNEQDLTNHLGVIAKSGTKEFINNLKQDEKKSASLIGQFGVGFYSAFIVSEKVEVTSKKALESDAYIWFSDGKTGYEIEKAKKEESGTEIKLYLNKEGLEYANKWKIQEIIKKYSNHINYPIYIKYSEPIMKDGKQEGIEEKEEKLNETTALWTKNKSEIKAEEYNEFYKNTTFDYENPLMHVHTKAEGNLEYTNLFYIPSKAPYDLYYPNTKPGVKLFINRIFITDSEGSLLPNYLRFIKGIIDCQDLPLNVSREILQQNKILSKIKSSSVKKILSELEKLSKKNPEKFSKFSKEFGRCIKEGVYSDFENREKLISLIRFKSSSVDGFVSFKEYKERMKESQKSIYYITGGKENILKENPIVSAYKEKGFEILIMDDELDEAILNLIPEYEGLKLKAINKNETSNELKDENFKKIEEEFKDILTKVKEILKDHIKEVNLSATLIKEPSAIIVDSNDPTYQMQKIMLSMGQEVKEIKPILELNPNNKIVQNLKNLESEKLEKISILLFEEALLTSGMPSKNPGKFINIINEFLEKELL.

Residues 1-333 are a; substrate-binding; sequence MKKQFDTEVN…CQDLPLNVSR (333 aa). Residues 334-542 are b; it reads EILQQNKILS…SNDPTYQMQK (209 aa). Residues 543-616 form a c region; sequence IMLSMGQEVK…INEFLEKELL (74 aa).

It belongs to the heat shock protein 90 family. In terms of assembly, homodimer.

The protein resides in the cytoplasm. Its function is as follows. Molecular chaperone. Has ATPase activity. In Borrelia garinii subsp. bavariensis (strain ATCC BAA-2496 / DSM 23469 / PBi) (Borreliella bavariensis), this protein is Chaperone protein HtpG.